A 688-amino-acid polypeptide reads, in one-letter code: Potassium-transporting ATPase ATP-binding subunit (688 aa).

The next 4 membrane-spanning stretches (helical) occupy residues 35 to 55 (VMMV…VQFA), 62 to 82 (AVFS…ANLA), 219 to 239 (IALS…VVTL), and 260 to 280 (VLVA…LSAI). Aspartate 313 acts as the 4-aspartylphosphate intermediate in catalysis. Residues aspartate 350, glutamate 354, 383-390 (FSAQTRMS), and lysine 401 contribute to the ATP site. Aspartate 524 and aspartate 528 together coordinate Mg(2+). The next 3 helical transmembrane spans lie at 594-614 (FAIL…LNLM), 622-642 (AILS…PLAL), and 668-688 (VVLP…MGWI).

This sequence belongs to the cation transport ATPase (P-type) (TC 3.A.3) family. Type IA subfamily. The system is composed of three essential subunits: KdpA, KdpB and KdpC.

The protein resides in the cell inner membrane. The enzyme catalyses K(+)(out) + ATP + H2O = K(+)(in) + ADP + phosphate + H(+). Its function is as follows. Part of the high-affinity ATP-driven potassium transport (or Kdp) system, which catalyzes the hydrolysis of ATP coupled with the electrogenic transport of potassium into the cytoplasm. This subunit is responsible for energy coupling to the transport system and for the release of the potassium ions to the cytoplasm. The protein is Potassium-transporting ATPase ATP-binding subunit of Tolumonas auensis (strain DSM 9187 / NBRC 110442 / TA 4).